Here is a 441-residue protein sequence, read N- to C-terminus: UDP-N-acetylmuramoylalanine--D-glutamate ligase (441 aa).

Residue 129–135 coordinates ATP; it reads GTNGKST.

It belongs to the MurCDEF family.

It is found in the cytoplasm. The catalysed reaction is UDP-N-acetyl-alpha-D-muramoyl-L-alanine + D-glutamate + ATP = UDP-N-acetyl-alpha-D-muramoyl-L-alanyl-D-glutamate + ADP + phosphate + H(+). The protein operates within cell wall biogenesis; peptidoglycan biosynthesis. In terms of biological role, cell wall formation. Catalyzes the addition of glutamate to the nucleotide precursor UDP-N-acetylmuramoyl-L-alanine (UMA). This Zymomonas mobilis subsp. mobilis (strain ATCC 31821 / ZM4 / CP4) protein is UDP-N-acetylmuramoylalanine--D-glutamate ligase.